We begin with the raw amino-acid sequence, 243 residues long: Segregation and condensation protein A (243 aa).

Belongs to the ScpA family. Component of a cohesin-like complex composed of ScpA, ScpB and the Smc homodimer, in which ScpA and ScpB bind to the head domain of Smc. The presence of the three proteins is required for the association of the complex with DNA.

The protein localises to the cytoplasm. Functionally, participates in chromosomal partition during cell division. May act via the formation of a condensin-like complex containing Smc and ScpB that pull DNA away from mid-cell into both cell halves. The chain is Segregation and condensation protein A from Staphylococcus haemolyticus (strain JCSC1435).